A 267-amino-acid chain; its full sequence is Apolipoprotein A-I (267 aa).

An N-terminal signal peptide occupies residues 1 to 18 (MKAAVLTLAVLFLTGSQA). 2 consecutive repeat copies span residues 68–89 (LKLL…EQLG) and 90–111 (PVTQ…QEMS). Positions 68–267 (LKLLDNWDSM…EEYTKKLNTQ (200 aa)) are 10 X approximate tandem repeats. Methionine 110 is subject to Methionine sulfoxide. One copy of the 3; half-length repeat lies at 112 to 122 (KDLEEVKAKVQ). 5 tandem repeats follow at residues 123 to 144 (PYLD…QKVE), 145 to 166 (PLRA…EKLS), 167 to 188 (PLGE…THLA), 189 to 210 (PYTD…ENGG), and 211 to 232 (ARLA…EKAK). Methionine 136 is modified (methionine sulfoxide). The stretch at 233 to 243 (PALEDLRQGLL) is one 9; half-length repeat. Repeat unit 10 spans residues 244–267 (PVLESFKVSFLSALEEYTKKLNTQ).

This sequence belongs to the apolipoprotein A1/A4/E family. Homodimer. Interacts with APOA1BP and CLU. Component of a sperm activating protein complex (SPAP), consisting of APOA1, an immunoglobulin heavy chain, an immunoglobulin light chain and albumin. Interacts with NDRG1. Interacts with SCGB3A2. Interacts with NAXE and YJEFN3. Glycosylated. Post-translationally, palmitoylated. In terms of tissue distribution, major protein of plasma HDL, also found in chylomicrons.

The protein localises to the secreted. Participates in the reverse transport of cholesterol from tissues to the liver for excretion by promoting cholesterol efflux from tissues and by acting as a cofactor for the lecithin cholesterol acyltransferase (LCAT). As part of the SPAP complex, activates spermatozoa motility. The sequence is that of Apolipoprotein A-I (APOA1) from Pongo abelii (Sumatran orangutan).